Reading from the N-terminus, the 145-residue chain is NADH-quinone oxidoreductase subunit A (145 aa).

The next 3 membrane-spanning stretches (helical) occupy residues 14 to 34 (FAVF…GGFL), 66 to 86 (FYLV…LYAW), and 96 to 116 (VGFI…VYLV).

This sequence belongs to the complex I subunit 3 family. NDH-1 is composed of 13 different subunits. Subunits NuoA, H, J, K, L, M, N constitute the membrane sector of the complex.

Its subcellular location is the cell inner membrane. The catalysed reaction is a quinone + NADH + 5 H(+)(in) = a quinol + NAD(+) + 4 H(+)(out). Its function is as follows. NDH-1 shuttles electrons from NADH, via FMN and iron-sulfur (Fe-S) centers, to quinones in the respiratory chain. The immediate electron acceptor for the enzyme in this species is believed to be ubiquinone. Couples the redox reaction to proton translocation (for every two electrons transferred, four hydrogen ions are translocated across the cytoplasmic membrane), and thus conserves the redox energy in a proton gradient. In Sodalis glossinidius (strain morsitans), this protein is NADH-quinone oxidoreductase subunit A.